A 110-amino-acid polypeptide reads, in one-letter code: Evasin P1166 (110 aa).

An N-terminal signal peptide occupies residues 1 to 24 (MEVKIFTLLQIALFIALGIHLVVA). Cystine bridges form between Cys-45/Cys-67, Cys-49/Cys-69, and Cys-60/Cys-80. Residue Asn-48 is glycosylated (N-linked (GlcNAc...) asparagine). Residues 89–110 (SEYPNPKSSEIDAAAPLPRETH) form a disordered region.

Its subcellular location is the secreted. Its function is as follows. Salivary chemokine-binding protein which binds to host chemokines CXCL1, CXCL2 and CXCL8. This Ixodes ricinus (Common tick) protein is Evasin P1166.